Here is a 213-residue protein sequence, read N- to C-terminus: Translation initiation factor IF-3 (213 aa).

The tract at residues V178 to S213 is disordered. A compositionally biased stretch (basic and acidic residues) spans I182–K201.

Belongs to the IF-3 family. In terms of assembly, monomer.

It is found in the cytoplasm. Its function is as follows. IF-3 binds to the 30S ribosomal subunit and shifts the equilibrium between 70S ribosomes and their 50S and 30S subunits in favor of the free subunits, thus enhancing the availability of 30S subunits on which protein synthesis initiation begins. The polypeptide is Translation initiation factor IF-3 (Solibacter usitatus (strain Ellin6076)).